Consider the following 846-residue polypeptide: Homeobox protein 12 (846 aa).

8 stretches are compositionally biased toward low complexity: residues 78 to 94 (IIGSSSNTLSTPSVQAT), 160 to 170 (PLSSSSTVVPA), 237 to 249 (GNHNNNNNNYNYN), 289 to 301 (QPQSQSQSQQLQP), 309 to 321 (LQPQLQSQPQSQQ), 331 to 352 (NNNNNNNNNNNNNNNNNNNNNN), 394 to 443 (NYNQ…SNSN), and 458 to 482 (NNNNNNNKTFQQTSQQQQQQQQQIY). Disordered regions lie at residues 78-103 (IIGSSSNTLSTPSVQATPPTPPPSSS), 151-177 (IVQPPPPSTPLSSSSTVVPASTPPPSV), 230-249 (NGNGNGNGNHNNNNNNYNYN), 286-374 (GTKQ…SSSP), 394-482 (NYNQ…QQIY), and 515-571 (FKQN…NNQF). Acidic residues predominate over residues 524–546 (NNDDDDDDDDDEEEEEEEEDDND). A coiled-coil region spans residues 553–604 (SYDEENNNNNNNNNNNNQFKNESIIIGDNYYEIINDRIKSIKQKLHFLEKNS). Residues 559-569 (NNNNNNNNNNN) are compositionally biased toward low complexity. Residues 773-835 (DKKNRRTLND…NKRSREKNQR (63 aa)) constitute a DNA-binding region (homeobox).

It localises to the nucleus. Its function is as follows. Putative transcription factor. The protein is Homeobox protein 12 (hbx12) of Dictyostelium discoideum (Social amoeba).